We begin with the raw amino-acid sequence, 100 residues long: Large ribosomal subunit protein uL23 (100 aa).

The protein belongs to the universal ribosomal protein uL23 family. As to quaternary structure, part of the 50S ribosomal subunit. Contacts protein L29, and trigger factor when it is bound to the ribosome.

Its function is as follows. One of the early assembly proteins it binds 23S rRNA. One of the proteins that surrounds the polypeptide exit tunnel on the outside of the ribosome. Forms the main docking site for trigger factor binding to the ribosome. The polypeptide is Large ribosomal subunit protein uL23 (Parasynechococcus marenigrum (strain WH8102)).